Consider the following 201-residue polypeptide: Receptor expression-enhancing protein 6 (201 aa).

3 helical membrane passes run 36–56, 89–109, and 117–137; these read LAAG…GASL, WVVY…LFWF, and CAFL…LLYH.

Belongs to the DP1 family. Interacts with STX3. Interacts with clathrin. In terms of tissue distribution, expressed in the inner segment of rod photoreceptors and outer plexiform layer of the retina (at protein level). Expressed in liver, but not detected in brain, muscle, kidney, retinal cone photoreceptors or retinal ganglion cells (at protein level). Highly expressed in the ganglion cell layer of the retina and in liver, and also detected at low levels in kidney and testis. Isoform 1: Expressed in the retina. Isoform 2: Expressed in liver.

The protein resides in the endoplasmic reticulum membrane. The protein localises to the cytoplasmic vesicle. It localises to the clathrin-coated vesicle membrane. Required for correct function and survival of retinal photoreceptors. Required for retinal development. In rod photoreceptors, facilitates stability and/or trafficking of guanylate cyclases and is required to maintain endoplasmic reticulum and mitochondrial homeostasis. May play a role in clathrin-coated intracellular vesicle trafficking of proteins from the endoplasmic reticulum to the retinal rod plasma membrane. The chain is Receptor expression-enhancing protein 6 (Reep6) from Mus musculus (Mouse).